A 229-amino-acid chain; its full sequence is Triosephosphate isomerase (229 aa).

9–11 (NYK) is a substrate binding site. Catalysis depends on His-93, which acts as the Electrophile. Glu-141 functions as the Proton acceptor in the catalytic mechanism. Substrate is bound by residues Ile-146, Gly-180, and 201–202 (AS).

This sequence belongs to the triosephosphate isomerase family. As to quaternary structure, homotetramer; dimer of dimers.

The protein localises to the cytoplasm. It carries out the reaction D-glyceraldehyde 3-phosphate = dihydroxyacetone phosphate. It participates in carbohydrate biosynthesis; gluconeogenesis. The protein operates within carbohydrate degradation; glycolysis; D-glyceraldehyde 3-phosphate from glycerone phosphate: step 1/1. In terms of biological role, involved in the gluconeogenesis. Catalyzes stereospecifically the conversion of dihydroxyacetone phosphate (DHAP) to D-glyceraldehyde-3-phosphate (G3P). The polypeptide is Triosephosphate isomerase (Sulfurisphaera tokodaii (strain DSM 16993 / JCM 10545 / NBRC 100140 / 7) (Sulfolobus tokodaii)).